The primary structure comprises 392 residues: uncharacterized protein (392 aa).

The N-terminal stretch at 1 to 23 (MWTALVLVWISSVLLPRSHMMSA) is a signal peptide. The Extracellular portion of the chain corresponds to 24 to 342 (EPRNIVTNKW…DALTPSLVNK (319 aa)). An N-linked (GlcNAc...) asparagine glycan is attached at Asn-77. Disordered stretches follow at residues 83-154 (AEVT…PRTA) and 167-320 (AAGT…TDSC). A compositionally biased stretch (low complexity) spans 86 to 97 (TTHGTNTSTPTT). Composition is skewed to polar residues over residues 107–127 (SRTL…TRPT) and 170–249 (TVNT…SAST). An N-linked (GlcNAc...) asparagine glycan is attached at Asn-172. Composition is skewed to low complexity over residues 265 to 277 (SPTT…LPTQ) and 284 to 309 (TLLT…SRSS). A helical transmembrane segment spans residues 343–363 (MLLLVVLLVGVTLFIAVLVMF). The Cytoplasmic segment spans residues 364–392 (ALQAYESYKKKDYTQVDYLINGMYADSEM).

It is found in the cell membrane. The protein resides in the golgi apparatus. The protein localises to the trans-Golgi network membrane. This is an uncharacterized protein from Mus musculus (Mouse).